The sequence spans 73 residues: Large ribosomal subunit protein bL31 (73 aa).

The protein belongs to the bacterial ribosomal protein bL31 family. Type A subfamily. In terms of assembly, part of the 50S ribosomal subunit.

Its function is as follows. Binds the 23S rRNA. This chain is Large ribosomal subunit protein bL31, found in Paracoccus denitrificans (strain Pd 1222).